The following is a 232-amino-acid chain: 7-cyano-7-deazaguanine synthase (232 aa).

7 to 17 contributes to the ATP binding site; it reads CSGGLDSVSLA. Zn(2+) contacts are provided by Cys-185, Cys-193, Cys-196, and Cys-199.

Belongs to the QueC family. Zn(2+) is required as a cofactor.

It catalyses the reaction 7-carboxy-7-deazaguanine + NH4(+) + ATP = 7-cyano-7-deazaguanine + ADP + phosphate + H2O + H(+). It functions in the pathway purine metabolism; 7-cyano-7-deazaguanine biosynthesis. Its function is as follows. Catalyzes the ATP-dependent conversion of 7-carboxy-7-deazaguanine (CDG) to 7-cyano-7-deazaguanine (preQ(0)). This chain is 7-cyano-7-deazaguanine synthase, found in Brucella abortus (strain S19).